Here is a 380-residue protein sequence, read N- to C-terminus: MDFNYDDTQKKHAAMIAQVCAEQLAACGNEHSRYFTARQWAICGEAGLLGLSIPREYGGQGLGALSTAIAMHAFGLGCTDMGLVFAAAAHQFACAMPIVEFATAETKRDVLPKLASGEFIGSNAITEPEAGSDSSNLKSRAWPQADGSYRLDGHKSFAGNAPIADIFVTYATTQPEYGALGVSGFIVHRSSAGLRVSEPLDKVCLRSCPAGEVFFDDCRVPEVNRLGEEGQGRQVFQSSMGWERACLFAAFLGMMERQLEQTIEHARTRRQFGKPIGDNQAVSHRIAQMKLRLESARLLLFRACWGMDQGDPGQLNIALSKLAISEGALASSIDAVRIFGGRGCLESFGIEAMLRDSIGTTIFSGTSDMQHEIIARELKL.

Glu-243 acts as the Proton acceptor in catalysis. Residues Arg-269 and Gln-280 each coordinate FAD.

It belongs to the acyl-CoA dehydrogenase family. The cofactor is FAD.

The catalysed reaction is L-prolyl-[peptidyl-carrier protein] + 2 oxidized [electron-transfer flavoprotein] + H(+) = (1H-pyrrole-2-carbonyl)-[peptidyl-carrier protein] + 2 reduced [electron-transfer flavoprotein]. Its function is as follows. Involved in the biosynthesis of pyoluteorin. Catalyzes the desaturation of the L-prolyl-[PltL] to yield 1H-pyrrole-2-carbonyl-[PltL]. The sequence is that of L-prolyl-[peptidyl-carrier protein] dehydrogenase from Pseudomonas fluorescens (strain ATCC BAA-477 / NRRL B-23932 / Pf-5).